The primary structure comprises 175 residues: Pathogenesis-related protein 1A1 (175 aa).

Residues 1 to 21 (MKSSIFVACFITFIIFHSSQA) form the signal peptide. The SCP domain maps to 29–146 (LNAHNAARRR…SGWVFITCNY (118 aa)). 3 disulfides stabilise this stretch: Cys-65/Cys-135, Cys-108/Cys-114, and Cys-130/Cys-144.

It belongs to the CRISP family.

Functionally, probably involved in the defense reaction of plants against pathogens. This chain is Pathogenesis-related protein 1A1, found in Solanum lycopersicum (Tomato).